A 602-amino-acid polypeptide reads, in one-letter code: Elongation factor 4 (602 aa).

One can recognise a tr-type G domain in the interval 6 to 188 (RNVRNFSIIA…RITEVVPEPA (183 aa)). Residues 18-23 (DHGKST) and 135-138 (NKID) each bind GTP.

It belongs to the TRAFAC class translation factor GTPase superfamily. Classic translation factor GTPase family. LepA subfamily.

It is found in the cell membrane. The enzyme catalyses GTP + H2O = GDP + phosphate + H(+). Functionally, required for accurate and efficient protein synthesis under certain stress conditions. May act as a fidelity factor of the translation reaction, by catalyzing a one-codon backward translocation of tRNAs on improperly translocated ribosomes. Back-translocation proceeds from a post-translocation (POST) complex to a pre-translocation (PRE) complex, thus giving elongation factor G a second chance to translocate the tRNAs correctly. Binds to ribosomes in a GTP-dependent manner. In Oceanobacillus iheyensis (strain DSM 14371 / CIP 107618 / JCM 11309 / KCTC 3954 / HTE831), this protein is Elongation factor 4.